Here is a 917-residue protein sequence, read N- to C-terminus: Ion channel POLLUX (917 aa).

Positions 1-154 (MIPLPVAAAN…SSSPVARPQH (154 aa)) are disordered. Positions 7 to 19 (AAANSNSNSNSNS) are enriched in low complexity. Polar residues predominate over residues 78-89 (HQWNYPSFLGTT). Over residues 119–136 (KTNTNTNTNTNTNTNTNT) the composition is skewed to low complexity. 4 helical membrane-spanning segments follow: residues 160 to 180 (PPIFYLLIITCIIFVPYSSYL), 230 to 250 (LYIVLFTLILPFLLYKYLDYL), 290 to 310 (LALLFATLFLIGFGGLALYAV), and 342 to 362 (VVSVSISSGGMLIFAMMLGLV). 2 consecutive RCK N-terminal domains span residues 383 to 524 (RNHI…ETVV) and 643 to 792 (PEKI…DKSI). The stretch at 413–435 (VIVVLAEKEKEEMEMDITKLEFD) forms a coiled coil.

It belongs to the castor/pollux (TC 1.A.1.23) family. In terms of assembly, homooligomer. Mainly expressed in nodules. Also detected in infected and uninfected roots, leaves, seed pods, and flower buds.

The protein localises to the nucleus membrane. Its function is as follows. Ion channel with permeability for potassium. Involved in perinuclear calcium spiking but not in cytosolic calcium influx. Required for early signal transduction events leading to endosymbiosis. Acts early in a signal transduction chain leading from the perception of Nod factor to the activation of calcium spiking. Also involved in fungal entry into root epidermal cells during the establishment of the arbuscular mycorrhizal symbiosis. This is Ion channel POLLUX (POLLUX) from Lotus japonicus (Lotus corniculatus var. japonicus).